Reading from the N-terminus, the 305-residue chain is MSSLVRPINLGKINNSQSTVKDYILLMKPRVMSLVIFTGFVGMWLAPYSVHPFIAGIAVVCIALGAGSAGAINMWYDRDIDSLMKRTQKRPIVRGVIESDEALSFGLITGFFAVFFMALCVNLLASFLLLFTIFYYICIYTIWLKRRSIQNIVIGGVSGALPPVIGYAAVSNTISLESIILFLIIFIWTPPHSWALALFCNDDYKNCKVPMMPAVKGTVYTKKQILIYSILLFIVSLMPFFIGMNNFIYLIISGILGVVFLYYAGSLFYDTPDNKQAKRFFAYSIFYLFFIFLLLYSTNTISTIS.

The next 9 helical transmembrane spans lie at 31–51 (VMSLVIFTGFVGMWLAPYSVH), 52–72 (PFIAGIAVVCIALGAGSAGAI), 96–118 (VIESDEALSFGLITGFFAVFFMA), 123–145 (LLASFLLLFTIFYYICIYTIWLK), 151–171 (NIVIGGVSGALPPVIGYAAVS), 179–199 (IILFLIIFIWTPPHSWALALF), 225–245 (ILIYSILLFIVSLMPFFIGMN), 247–267 (FIYLIISGILGVVFLYYAGSL), and 281–301 (FAYSIFYLFFIFLLLYSTNTI).

The protein belongs to the UbiA prenyltransferase family. Protoheme IX farnesyltransferase subfamily.

It localises to the cell inner membrane. The enzyme catalyses heme b + (2E,6E)-farnesyl diphosphate + H2O = Fe(II)-heme o + diphosphate. It functions in the pathway porphyrin-containing compound metabolism; heme O biosynthesis; heme O from protoheme: step 1/1. In terms of biological role, converts heme B (protoheme IX) to heme O by substitution of the vinyl group on carbon 2 of heme B porphyrin ring with a hydroxyethyl farnesyl side group. This Rickettsia rickettsii (strain Iowa) protein is Protoheme IX farnesyltransferase.